A 338-amino-acid chain; its full sequence is UDP-glucose 4-epimerase (338 aa).

Residues 11–12, 31–36, 58–59, 80–84, Asn99, Ser124, Tyr149, Lys153, and Phe178 contribute to the NAD(+) site; these read FI, DNLCNS, DI, and FAGLK. Positions 124 and 149 each coordinate substrate. The active-site Proton acceptor is Tyr149. Substrate is bound by residues Asn179, 199–200, 216–218, Arg231, and 292–295; these read NL, SVF, and RAGD.

The protein belongs to the NAD(P)-dependent epimerase/dehydratase family. As to quaternary structure, homodimer. It depends on NAD(+) as a cofactor.

The catalysed reaction is UDP-alpha-D-glucose = UDP-alpha-D-galactose. It participates in carbohydrate metabolism; galactose metabolism. Involved in the metabolism of galactose. Plays an essential role in the incorporation of galactose into meningococcal lipopolysaccharide surface molecules, which are important for pathogenesis. Catalyzes the conversion of UDP-galactose (UDP-Gal) to UDP-glucose (UDP-Glc) through a mechanism involving the transient reduction of NAD. The sequence is that of UDP-glucose 4-epimerase (galE) from Neisseria gonorrhoeae.